Here is a 1788-residue protein sequence, read N- to C-terminus: Protein TIC 214 (1788 aa).

A run of 6 helical transmembrane segments spans residues 25–45, 70–90, 95–115, 132–152, 180–200, and 223–243; these read IINSVVVVGLYYGFFTTFSIG, IGFIAGQLMMFISIYYAPLHL, PHTITALVLPYLLFHFFWNNH, LNIQCIFLNSLIFQLFNHFIL, VGWLVGHIFFMKWVELVLFWI, and IFSILLFIVCIYYLGRMPSPL. Disordered stretches follow at residues 248–297 and 1482–1526; these read LKKT…EEKE and DLEN…DFDR. Composition is skewed to basic and acidic residues over residues 253 to 277 and 1513 to 1526; these read KREERGKNKEETDVEIEKISEEKGT and PLKKQTDGKEDFDR.

The protein belongs to the TIC214 family. In terms of assembly, part of the Tic complex.

It is found in the plastid. The protein resides in the chloroplast inner membrane. Involved in protein precursor import into chloroplasts. May be part of an intermediate translocation complex acting as a protein-conducting channel at the inner envelope. The sequence is that of Protein TIC 214 from Ranunculus macranthus (Large buttercup).